We begin with the raw amino-acid sequence, 853 residues long: DNA mismatch repair protein MutS (853 aa).

ATP is bound at residue 613–620 (GPNMGGKS).

This sequence belongs to the DNA mismatch repair MutS family.

In terms of biological role, this protein is involved in the repair of mismatches in DNA. It is possible that it carries out the mismatch recognition step. This protein has a weak ATPase activity. The protein is DNA mismatch repair protein MutS of Vibrio campbellii (strain ATCC BAA-1116).